The sequence spans 264 residues: 5'-nucleotidase SurE (264 aa).

The a divalent metal cation site is built by D10, D11, S43, and N99.

The protein belongs to the SurE nucleotidase family. A divalent metal cation is required as a cofactor.

It is found in the cytoplasm. It carries out the reaction a ribonucleoside 5'-phosphate + H2O = a ribonucleoside + phosphate. Functionally, nucleotidase that shows phosphatase activity on nucleoside 5'-monophosphates. This Methanococcus maripaludis (strain C6 / ATCC BAA-1332) protein is 5'-nucleotidase SurE.